The sequence spans 182 residues: Core-binding factor subunit beta (182 aa).

Ala173 carries the phosphoserine modification.

The protein belongs to the CBF-beta family. Heterodimer with RUNX1, RUNX2 and RUNX3. Interacts with COPRS. Found in a complex with PRMT5 and RUNX1. In terms of assembly, (Microbial infection) Interacts with HIV-1 Vif; forming an active cullin-5-RING E3 ubiquitin-protein ligase complex (ECS complex).

It is found in the nucleus. Functionally, forms the heterodimeric complex core-binding factor (CBF) with RUNX family proteins (RUNX1, RUNX2, and RUNX3). RUNX members modulate the transcription of their target genes through recognizing the core consensus binding sequence 5'-TGTGGT-3', or very rarely, 5'-TGCGGT-3', within their regulatory regions via their runt domain, while CBFB is a non-DNA-binding regulatory subunit that allosterically enhances the sequence-specific DNA-binding capacity of RUNX. The heterodimers bind to the core site of a number of enhancers and promoters, including murine leukemia virus, polyomavirus enhancer, T-cell receptor enhancers, LCK, IL3 and GM-CSF promoters. CBF complexes repress ZBTB7B transcription factor during cytotoxic (CD8+) T cell development. They bind to RUNX-binding sequence within the ZBTB7B locus acting as transcriptional silencer and allowing for cytotoxic T cell differentiation. (Microbial infection) Following infection, hijacked by the HIV-1 Vif protein, leading to the formation a cullin-5-RING E3 ubiquitin-protein ligase complex (ECS complex) that catalyzes ubiquitination and degradation of APOBEC3F and APOBEC3G. The complex can also ubiquitinate APOBEC3H to some extent. Association with HIV-1 Vif protein also inhibits the transcription coactivator activity of CBFB/CBF-beta. The polypeptide is Core-binding factor subunit beta (CBFB) (Homo sapiens (Human)).